We begin with the raw amino-acid sequence, 256 residues long: Thiazole synthase (256 aa).

K95 (schiff-base intermediate with DXP) is an active-site residue. Residues G156, 182-183 (AG), and 204-205 (NT) each bind 1-deoxy-D-xylulose 5-phosphate.

The protein belongs to the ThiG family. Homotetramer. Forms heterodimers with either ThiH or ThiS.

It is found in the cytoplasm. The enzyme catalyses [ThiS sulfur-carrier protein]-C-terminal-Gly-aminoethanethioate + 2-iminoacetate + 1-deoxy-D-xylulose 5-phosphate = [ThiS sulfur-carrier protein]-C-terminal Gly-Gly + 2-[(2R,5Z)-2-carboxy-4-methylthiazol-5(2H)-ylidene]ethyl phosphate + 2 H2O + H(+). The protein operates within cofactor biosynthesis; thiamine diphosphate biosynthesis. Its function is as follows. Catalyzes the rearrangement of 1-deoxy-D-xylulose 5-phosphate (DXP) to produce the thiazole phosphate moiety of thiamine. Sulfur is provided by the thiocarboxylate moiety of the carrier protein ThiS. In vitro, sulfur can be provided by H(2)S. The protein is Thiazole synthase of Idiomarina loihiensis (strain ATCC BAA-735 / DSM 15497 / L2-TR).